We begin with the raw amino-acid sequence, 332 residues long: Tryptophan--tRNA ligase (332 aa).

ATP is bound by residues 11–13 (QPS) and 19–20 (GN). A 'HIGH' region motif is present at residues 12–20 (PSGELTIGN). Aspartate 135 lines the L-tryptophan pocket. ATP-binding positions include 147 to 149 (GQD), valine 186, and 195 to 199 (KMSKS). Positions 195-199 (KMSKS) match the 'KMSKS' region motif.

The protein belongs to the class-I aminoacyl-tRNA synthetase family. Homodimer.

It localises to the cytoplasm. It catalyses the reaction tRNA(Trp) + L-tryptophan + ATP = L-tryptophyl-tRNA(Trp) + AMP + diphosphate + H(+). Catalyzes the attachment of tryptophan to tRNA(Trp). This is Tryptophan--tRNA ligase from Shewanella oneidensis (strain ATCC 700550 / JCM 31522 / CIP 106686 / LMG 19005 / NCIMB 14063 / MR-1).